We begin with the raw amino-acid sequence, 306 residues long: Ornithine carbamoyltransferase (306 aa).

Residues 53-56 (STRT), Q80, R104, and 131-134 (HPCQ) contribute to the carbamoyl phosphate site. Residues N162, D219, and 223–224 (SM) contribute to the L-ornithine site. Carbamoyl phosphate-binding positions include 259–260 (CL) and R287.

This sequence belongs to the aspartate/ornithine carbamoyltransferase superfamily. OTCase family.

It localises to the cytoplasm. It catalyses the reaction carbamoyl phosphate + L-ornithine = L-citrulline + phosphate + H(+). Its pathway is amino-acid biosynthesis; L-arginine biosynthesis; L-arginine from L-ornithine and carbamoyl phosphate: step 1/3. Its function is as follows. Reversibly catalyzes the transfer of the carbamoyl group from carbamoyl phosphate (CP) to the N(epsilon) atom of ornithine (ORN) to produce L-citrulline. In Acinetobacter baumannii (strain ATCC 17978 / DSM 105126 / CIP 53.77 / LMG 1025 / NCDC KC755 / 5377), this protein is Ornithine carbamoyltransferase.